A 179-amino-acid chain; its full sequence is Insulin-like growth factor 2 (179 aa).

The first 24 residues, M1–A24, serve as a signal peptide directing secretion. A b region spans residues A25–F52. 3 cysteine pairs are disulfide-bonded: C33–C71, C45–C84, and C70–C75. Residues S53–R64 form a c region. The segment at G65–A85 is a. The segment at A86–E91 is d. Residues R92 to D179 constitute a propeptide, e peptide. T106 carries an O-linked (GalNAc...) threonine glycan. The O-linked (GalNAc...) serine glycan is linked to S154. The interval A160 to D179 is disordered. T163 carries O-linked (GalNAc...) threonine glycosylation.

It belongs to the insulin family. In terms of assembly, interacts with MYORG; this interaction is required for IGF2 secretion. Interacts with integrins ITGAV:ITGB3 and ITGA6:ITGB4; integrin-binding is required for IGF2 signaling. Interacts with IGFBP2. Post-translationally, proteolytically processed by PCSK4, proIGF2 is cleaved at Arg-128 and Arg-92 to generate big-IGF2 and mature IGF2.

The protein resides in the secreted. The insulin-like growth factors possess growth-promoting activity. Major fetal growth hormone in mammals. Plays a key role in regulating fetoplacental development. IGF2 is influenced by placental lactogen. Also involved in tissue differentiation. In adults, involved in glucose metabolism in adipose tissue, skeletal muscle and liver. Acts as a ligand for integrin which is required for IGF2 signaling. Positively regulates myogenic transcription factor MYOD1 function by facilitating the recruitment of transcriptional coactivators, thereby controlling muscle terminal differentiation. Inhibits myoblast differentiation and modulates metabolism via increasing the mitochondrial respiration rate. In terms of biological role, preptin undergoes glucose-mediated co-secretion with insulin, and acts as a physiological amplifier of glucose-mediated insulin secretion. Exhibits osteogenic properties by increasing osteoblast mitogenic activity through phosphoactivation of MAPK1 and MAPK3. The protein is Insulin-like growth factor 2 of Ovis aries (Sheep).